Consider the following 223-residue polypeptide: Ribose-5-phosphate isomerase A (223 aa).

Substrate contacts are provided by residues 32 to 35 (TGST), 83 to 86 (DGAD), and 96 to 99 (KGGG). Catalysis depends on Glu105, which acts as the Proton acceptor. Lys123 serves as a coordination point for substrate.

The protein belongs to the ribose 5-phosphate isomerase family. In terms of assembly, homodimer.

The enzyme catalyses aldehydo-D-ribose 5-phosphate = D-ribulose 5-phosphate. It participates in carbohydrate degradation; pentose phosphate pathway; D-ribose 5-phosphate from D-ribulose 5-phosphate (non-oxidative stage): step 1/1. Its function is as follows. Catalyzes the reversible conversion of ribose-5-phosphate to ribulose 5-phosphate. This Acinetobacter baumannii (strain AYE) protein is Ribose-5-phosphate isomerase A.